The sequence spans 463 residues: Nucleobindin-1 (463 aa).

The N-terminal stretch at 1-26 (MPPSGPQGTLLLLPLLLLLLLRAVLA) is a signal peptide. Ser86 carries the post-translational modification Phosphoserine. Phosphothreonine is present on Thr148. Residues 150–218 (EARDLELLIQ…QQRRHREHPK (69 aa)) adopt a coiled-coil conformation. Residues 172–218 (HHEEFKRYEMLKEHERRRYLESLGEEQRKEAERRLEEQQRRHREHPK) mediate DNA binding. A compositionally biased stretch (basic and acidic residues) spans 193–210 (SLGEEQRKEAERRLEEQQ). A disordered region spans residues 193 to 221 (SLGEEQRKEAERRLEEQQRRHREHPKVNV). A binds to GNAI2 and GNAI3 region spans residues 228 to 321 (LKEVWEELDG…VTLGEFLAST (94 aa)). EF-hand domains follow at residues 240–275 (PNRFNPKTFFILHDINSDGVLDEQELEALFTKELEK) and 292–327 (ERLRMREHVMKNVDTNQDRLVTLGEFLASTQRKEFG). Ca(2+)-binding residues include Asp253, Asn255, Asp257, Glu264, Asp305, Asn307, Asp309, and Glu316. Residues 303–333 (NVDTNQDRLVTLGEFLASTQRKEFGDTGEGW) carry the GBA motif. Residues 341–409 (AYTEEELRRF…KQQQQQQQQQ (69 aa)) adopt a coiled-coil conformation. Residues 368–463 (LSQETEALGR…LPEVEVPQHL (96 aa)) are disordered. The residue at position 369 (Ser369) is a Phosphoserine. Basic and acidic residues predominate over residues 439 to 463 (DQKEVDTSEKKLLERLPEVEVPQHL).

It belongs to the nucleobindin family. As to quaternary structure, interacts (via GBA motif) with guanine nucleotide-binding protein G(i) alpha subunits GNAI1, GNAI2 and GNAI3 with higher affinity for GNAI1 and GNAI3 than for GNAI2. Preferentially interacts with inactive rather than active GNAI3. Interaction with GNAI3 is inhibited when NUCB1 binds calcium, probably due to a conformational change which renders the GBA motif inaccessible.

The protein localises to the golgi apparatus. Its subcellular location is the cis-Golgi network membrane. It localises to the cytoplasm. The protein resides in the secreted. In terms of biological role, major calcium-binding protein of the Golgi which may have a role in calcium homeostasis. Acts as a non-receptor guanine nucleotide exchange factor which binds to and activates alpha subunits of guanine nucleotide-binding proteins (G proteins). In Pongo abelii (Sumatran orangutan), this protein is Nucleobindin-1 (NUCB1).